The following is a 21-amino-acid chain: Protein YliM (21 aa).

This Escherichia coli (strain K12) protein is Protein YliM.